The primary structure comprises 189 residues: Elongation factor P (189 aa).

The residue at position 34 (Lys-34) is an N6-(3,6-diaminohexanoyl)-5-hydroxylysine.

It belongs to the elongation factor P family. May be beta-lysylated on the epsilon-amino group of Lys-34 by the combined action of EpmA and EpmB, and then hydroxylated on the C5 position of the same residue by EpmC (if this protein is present). Lysylation is critical for the stimulatory effect of EF-P on peptide-bond formation. The lysylation moiety may extend toward the peptidyltransferase center and stabilize the terminal 3-CCA end of the tRNA. Hydroxylation of the C5 position on Lys-34 may allow additional potential stabilizing hydrogen-bond interactions with the P-tRNA.

The protein localises to the cytoplasm. It functions in the pathway protein biosynthesis; polypeptide chain elongation. Functionally, involved in peptide bond synthesis. Alleviates ribosome stalling that occurs when 3 or more consecutive Pro residues or the sequence PPG is present in a protein, possibly by augmenting the peptidyl transferase activity of the ribosome. Modification of Lys-34 is required for alleviation. The chain is Elongation factor P from Halorhodospira halophila (strain DSM 244 / SL1) (Ectothiorhodospira halophila (strain DSM 244 / SL1)).